We begin with the raw amino-acid sequence, 88 residues long: Phosphocarrier protein HPr (88 aa).

Residues 1–88 enclose the HPr domain; the sequence is MAQKTFTVTA…DTMSKEGLGE (88 aa). Phosphoserine is present on Ser12. Residue His15 is the Pros-phosphohistidine intermediate of the active site. A Phosphoserine; by HPrK/P modification is found at Ser46.

Belongs to the HPr family.

It is found in the cytoplasm. With respect to regulation, phosphorylation on Ser-46 inhibits the phosphoryl transfer from enzyme I to HPr. Its function is as follows. General (non sugar-specific) component of the phosphoenolpyruvate-dependent sugar phosphotransferase system (sugar PTS). This major carbohydrate active-transport system catalyzes the phosphorylation of incoming sugar substrates concomitantly with their translocation across the cell membrane. The phosphoryl group from phosphoenolpyruvate (PEP) is transferred to the phosphoryl carrier protein HPr by enzyme I. Phospho-HPr then transfers it to the PTS EIIA domain. In terms of biological role, P-Ser-HPr interacts with the catabolite control protein A (CcpA), forming a complex that binds to DNA at the catabolite response elements cre, operator sites preceding a large number of catabolite-regulated genes. Thus, P-Ser-HPr is a corepressor in carbon catabolite repression (CCR), a mechanism that allows bacteria to coordinate and optimize the utilization of available carbon sources. P-Ser-HPr also plays a role in inducer exclusion, in which it probably interacts with several non-PTS permeases and inhibits their transport activity. This Priestia megaterium (Bacillus megaterium) protein is Phosphocarrier protein HPr (ptsH).